Consider the following 86-residue polypeptide: Large ribosomal subunit protein uL30m (86 aa).

Residues 67–86 (QQRELRKSNPGFIVEKRTID) form a disordered region.

Belongs to the universal ribosomal protein uL30 family. Component of the mitochondrial large ribosomal subunit (mt-LSU). Mature yeast 74S mitochondrial ribosomes consist of a small (37S) and a large (54S) subunit. The 37S small subunit contains a 15S ribosomal RNA (15S mt-rRNA) and 34 different proteins. The 54S large subunit contains a 21S rRNA (21S mt-rRNA) and 46 different proteins.

The protein resides in the mitochondrion. In terms of biological role, component of the mitochondrial ribosome (mitoribosome), a dedicated translation machinery responsible for the synthesis of mitochondrial genome-encoded proteins, including at least some of the essential transmembrane subunits of the mitochondrial respiratory chain. The mitoribosomes are attached to the mitochondrial inner membrane and translation products are cotranslationally integrated into the membrane. This Saccharomyces cerevisiae (strain ATCC 204508 / S288c) (Baker's yeast) protein is Large ribosomal subunit protein uL30m (MRPL33).